We begin with the raw amino-acid sequence, 256 residues long: Pimeloyl-[acyl-carrier protein] methyl ester esterase (256 aa).

The AB hydrolase-1 domain occupies 15-242 (HLVLLHGWGL…AAHAPFISHP (228 aa)). Substrate is bound by residues Trp-22, 82-83 (SL), and 143-147 (FLALQ). The active-site Nucleophile is the Ser-82. Residues Asp-207 and His-235 contribute to the active site. His-235 lines the substrate pocket.

The protein belongs to the AB hydrolase superfamily. Carboxylesterase BioH family. In terms of assembly, monomer.

The protein resides in the cytoplasm. It catalyses the reaction 6-carboxyhexanoyl-[ACP] methyl ester + H2O = 6-carboxyhexanoyl-[ACP] + methanol + H(+). Its pathway is cofactor biosynthesis; biotin biosynthesis. Functionally, the physiological role of BioH is to remove the methyl group introduced by BioC when the pimeloyl moiety is complete. It allows to synthesize pimeloyl-ACP via the fatty acid synthetic pathway through the hydrolysis of the ester bonds of pimeloyl-ACP esters. In Citrobacter koseri (strain ATCC BAA-895 / CDC 4225-83 / SGSC4696), this protein is Pimeloyl-[acyl-carrier protein] methyl ester esterase.